We begin with the raw amino-acid sequence, 584 residues long: HERV-H_2q24.3 provirus ancestral Env polyprotein (584 aa).

Positions 1 to 35 are cleaved as a signal peptide; sequence MIFAGKAPSNTSTLMKFYSLLLYSLLFSFPFLCHP. Residues 36–523 are Extracellular-facing; it reads LPLPSYLHHT…WALSNWMSWV (488 aa). N-linked (GlcNAc...) asparagine glycosylation occurs at Asn47. The CXXC motif lies at 64-67; that stretch reads CWLC. Asn199, Asn222, Asn265, Asn283, Asn352, and Asn370 each carry an N-linked (GlcNAc...) asparagine glycan. The tract at residues 388-408 is fusion peptide; it reads VIPLIPLMVGLGLSASTVALG. The short motif at 454–470 is the CKS-17 element; it reads LQNRRGLDLLTAEKGGL. An intrachain disulfide couples Cys471 to Cys478. The CX6CC signature appears at 471 to 479; it reads CIFLNEECC. N-linked (GlcNAc...) asparagine glycosylation is present at Asn483. Residues 524-544 form a helical membrane-spanning segment; it reads LPIVSPLIPIFLLLLFGPCIF. Topologically, residues 545-584 are cytoplasmic; sequence RLVSQFIQNRIQAITNHSIRQMFLLTSPQYHPLPQDLPSA.

This sequence belongs to the gamma type-C retroviral envelope protein family. HERV class-I H env subfamily. In terms of assembly, the surface (SU) and transmembrane (TM) proteins form a heterodimer. SU and TM are attached by noncovalent interactions or by a labile interchain disulfide bond. In terms of processing, specific enzymatic cleavages in vivo yield the mature SU and TM proteins. The CXXC motif is highly conserved across a broad range of retroviral envelope proteins. It is thought to participate in the formation of a labile disulfide bond possibly with the CX6CC motif present in the transmembrane protein. Isomerization of the intersubunit disulfide bond to an SU intrachain disulfide bond is thought to occur upon receptor recognition in order to allow membrane fusion. Low expression in skin and testis. No expression in several cell lines.

It is found in the virion. The protein resides in the cell membrane. In terms of biological role, retroviral envelope proteins mediate receptor recognition and membrane fusion during early infection. Endogenous envelope proteins may have kept, lost or modified their original function during evolution. This endogenous envelope protein has lost its original fusogenic properties but has immunosuppressive properties in vivo. Functionally, SU mediates receptor recognition. Its function is as follows. TM anchors the envelope heterodimer to the viral membrane through one transmembrane domain. The other hydrophobic domain, called fusion peptide, mediates fusion of the viral membrane with the target cell membrane. In Homo sapiens (Human), this protein is HERV-H_2q24.3 provirus ancestral Env polyprotein.